The chain runs to 716 residues: Beta-galactosidase (716 aa).

Glutamate 389 serves as the catalytic Proton donor. Glutamate 462 (nucleophile) is an active-site residue.

This sequence belongs to the glycosyl hydrolase 2 family. In terms of assembly, homodimer.

The enzyme catalyses Hydrolysis of terminal non-reducing beta-D-galactose residues in beta-D-galactosides.. Its function is as follows. Displays beta-galactosidase activity with the artificial chromogenic substrate o-nitrophenyl-beta-D-galactopyranoside (ONPG). The chain is Beta-galactosidase from Thermoanaerobacterium thermosulfurigenes (Clostridium thermosulfurogenes).